Reading from the N-terminus, the 58-residue chain is UPF0391 membrane protein COXBURSA331_A2131 (58 aa).

Helical transmembrane passes span 3-23 (FWVL…FTGI) and 30-50 (IAKI…IAML).

It belongs to the UPF0391 family.

It is found in the cell membrane. The polypeptide is UPF0391 membrane protein COXBURSA331_A2131 (Coxiella burnetii (strain RSA 331 / Henzerling II)).